The chain runs to 123 residues: Small ribosomal subunit protein uS13 (123 aa).

Positions 96 to 123 (GLPVRGQRTKTNARTRKGPKKTVAGKKK) are disordered.

Belongs to the universal ribosomal protein uS13 family. As to quaternary structure, part of the 30S ribosomal subunit. Forms a loose heterodimer with protein S19. Forms two bridges to the 50S subunit in the 70S ribosome.

Its function is as follows. Located at the top of the head of the 30S subunit, it contacts several helices of the 16S rRNA. In the 70S ribosome it contacts the 23S rRNA (bridge B1a) and protein L5 of the 50S subunit (bridge B1b), connecting the 2 subunits; these bridges are implicated in subunit movement. Contacts the tRNAs in the A and P-sites. The chain is Small ribosomal subunit protein uS13 from Nocardia farcinica (strain IFM 10152).